The following is a 67-amino-acid chain: Phycobilisome 7.8 kDa linker polypeptide, allophycocyanin-associated, core (67 aa).

In terms of domain architecture, CpcD-like spans Met1 to Ala56.

The protein belongs to the phycobilisome linker protein family.

Its subcellular location is the cellular thylakoid membrane. In terms of biological role, rod linker protein, associated with allophycocyanin. Linker polypeptides determine the state of aggregation and the location of the disk-shaped phycobiliprotein units within the phycobilisome and modulate their spectroscopic properties in order to mediate a directed and optimal energy transfer. The polypeptide is Phycobilisome 7.8 kDa linker polypeptide, allophycocyanin-associated, core (apcC) (Arthrospira platensis (Spirulina platensis)).